The following is a 206-amino-acid chain: Tumor protein D54 (206 aa).

Met-1 is subject to N-acetylmethionine. Residues 1–14 (MDSAGQDINLNSPN) are compositionally biased toward polar residues. A disordered region spans residues 1-24 (MDSAGQDINLNSPNKGLLSDSMTD). Residues Ser-3, Ser-12, Ser-19, and Ser-21 each carry the phosphoserine modification. Positions 38–82 (VEGLTEAEEEELRAELTKVEEEIVTLRQVLAAKERHCGELKRRLG) form a coiled coil. A phosphoserine mark is found at Ser-96, Ser-149, and Ser-161. Thr-163 is subject to Phosphothreonine. Ser-166 is modified (phosphoserine). Thr-173 is modified (phosphothreonine). Basic and acidic residues predominate over residues 175–185 (KSKVVGDRENG). The segment at 175 to 206 (KSKVVGDRENGSDSLPSSAGSGDKPLSDPAPF) is disordered. A phosphoserine mark is found at Ser-192 and Ser-195.

The protein belongs to the TPD52 family. In terms of assembly, forms a homodimer or heterodimer with other members of the family. Interacts with MAL2.

This chain is Tumor protein D54 (TPD52L2), found in Pongo abelii (Sumatran orangutan).